The following is a 330-amino-acid chain: MTVIVTGAAGFIGANIVKALNERGESRIIAVDNLTRADKFRNLVDCEIDDYLDKTEFVERFTRGDFGKVRAVFHEGACSDTMETDGRYMMDNNFRYSRAVLDACLAQGAQFLYASSAAIYGGSTRFVEEREVEAPLNVYGYSKFLFDQVIRRVLPSAKSQIAGFRYFNVYGPRETHKGRMASVAFHNFNQFRAEGKVKLFGEYNGYAPGEQTRDFVSVEDVAKVNLFFFDHPEKSGIFNLGTGRAQPFNDIASTVVNTLRALDNLPPLTLAQQVEQGLIEYVAFPDALRGKYQCFTQADQTKLRGAGYDAPFLTVQEGVDRYVRWLSGQV.

NADP(+) is bound by residues 11–12 (FI), 32–33 (DN), K39, K54, 75–79 (EGACS), and N92. Residue Y139 is the Proton acceptor of the active site. K143 contributes to the NADP(+) binding site. Substrate is bound at residue N168. V169 and K177 together coordinate NADP(+). K177 serves as the catalytic Proton acceptor. Substrate contacts are provided by residues R179, H186, 200 to 203 (FGEY), R213, and Y292.

This sequence belongs to the NAD(P)-dependent epimerase/dehydratase family. HldD subfamily. As to quaternary structure, homopentamer. NADP(+) serves as cofactor.

It carries out the reaction ADP-D-glycero-beta-D-manno-heptose = ADP-L-glycero-beta-D-manno-heptose. It functions in the pathway nucleotide-sugar biosynthesis; ADP-L-glycero-beta-D-manno-heptose biosynthesis; ADP-L-glycero-beta-D-manno-heptose from D-glycero-beta-D-manno-heptose 7-phosphate: step 4/4. Functionally, catalyzes the interconversion between ADP-D-glycero-beta-D-manno-heptose and ADP-L-glycero-beta-D-manno-heptose via an epimerization at carbon 6 of the heptose. The sequence is that of ADP-L-glycero-D-manno-heptose-6-epimerase from Burkholderia ambifaria (strain MC40-6).